A 524-amino-acid chain; its full sequence is Cytochrome P450 4F11 (524 aa).

Residues 15–37 (AASPWLLLLLVGGSWLLARVLAW) form a helical membrane-spanning segment. 4-hydroxynonenal-conjugated cysteine is present on residues C45 and C260. H261 carries the 4-hydroxynonenal-conjugated histidine modification. E328 lines the heme pocket. H347 is modified (4-hydroxynonenal-conjugated histidine). The residue at position 354 (C354) is a 4-hydroxynonenal-conjugated cysteine. At K451 the chain carries 4-hydroxynonenal-conjugated lysine. Position 468 (C468) interacts with heme.

The protein belongs to the cytochrome P450 family. The cofactor is heme. Post-translationally, 4-hydroxynonenal conjugation impairs substrate binding and the long-chain fatty acid omega-monooxygenase activity. Expressed mainly in human liver, followed by kidney, heart, and skeletal muscle.

Its subcellular location is the endoplasmic reticulum membrane. It is found in the microsome membrane. The catalysed reaction is an organic molecule + reduced [NADPH--hemoprotein reductase] + O2 = an alcohol + oxidized [NADPH--hemoprotein reductase] + H2O + H(+). It catalyses the reaction an omega-methyl-long-chain fatty acid + reduced [NADPH--hemoprotein reductase] + O2 = an omega-hydroxy-long-chain fatty acid + oxidized [NADPH--hemoprotein reductase] + H2O + H(+). The enzyme catalyses dodecanoate + reduced [NADPH--hemoprotein reductase] + O2 = 12-hydroxydodecanoate + oxidized [NADPH--hemoprotein reductase] + H2O + H(+). It carries out the reaction hexadecanoate + reduced [NADPH--hemoprotein reductase] + O2 = 16-hydroxyhexadecanoate + oxidized [NADPH--hemoprotein reductase] + H2O + H(+). The catalysed reaction is (9Z)-octadecenoate + reduced [NADPH--hemoprotein reductase] + O2 = 18-hydroxy-(9Z)-octadecenoate + oxidized [NADPH--hemoprotein reductase] + H2O + H(+). It catalyses the reaction (5Z,8Z,11Z,14Z)-eicosatetraenoate + reduced [NADPH--hemoprotein reductase] + O2 = 20-hydroxy-(5Z,8Z,11Z,14Z)-eicosatetraenoate + oxidized [NADPH--hemoprotein reductase] + H2O + H(+). The enzyme catalyses (4Z,7Z,10Z,13Z,16Z,19Z)-docosahexaenoate + reduced [NADPH--hemoprotein reductase] + O2 = 22-hydroxy-(4Z,7Z,10Z,13Z,16Z,19Z)-docosahexaenoate + oxidized [NADPH--hemoprotein reductase] + H2O + H(+). It carries out the reaction 8-hydroxy-(5Z,9E,11Z,14Z)-eicosatetraenoate + reduced [NADPH--hemoprotein reductase] + O2 = 8,20-dihydroxy-(5Z,9E,11Z,14Z)-eicosatetraenoate + oxidized [NADPH--hemoprotein reductase] + H2O + H(+). The catalysed reaction is 3-hydroxyhexadecanoate + reduced [NADPH--hemoprotein reductase] + O2 = 3,16-dihydroxyhexadecanoate + oxidized [NADPH--hemoprotein reductase] + H2O + H(+). It catalyses the reaction 3-hydroxyoctadecanoate + reduced [NADPH--hemoprotein reductase] + O2 = 3,18-dihydroxyoctadecanoate + oxidized [NADPH--hemoprotein reductase] + H2O + H(+). The enzyme catalyses phylloquinone + reduced [NADPH--hemoprotein reductase] + O2 = omega-hydroxyphylloquinone + oxidized [NADPH--hemoprotein reductase] + H2O + H(+). It carries out the reaction menaquinone-4 + reduced [NADPH--hemoprotein reductase] + O2 = omega-hydroxymenaquinone-4 + oxidized [NADPH--hemoprotein reductase] + H2O + H(+). The catalysed reaction is 2-hexyl-5-pentylresorcinol + reduced [NADPH--hemoprotein reductase] + O2 = 2-hexyl-5-(5-hydroxypentyl)resorcinol + oxidized [NADPH--hemoprotein reductase] + H2O + H(+). It catalyses the reaction 2-hexyl-5-heptylresorcinol + reduced [NADPH--hemoprotein reductase] + O2 = 2-hexyl-5-(7-hydroxyheptyl)resorcinol + oxidized [NADPH--hemoprotein reductase] + H2O + H(+). The enzyme catalyses 12-hydroxy-(5Z,8Z,10E,14Z)-eicosatetraenoate + reduced [NADPH--hemoprotein reductase] + O2 = 12,20-dihydroxy-(5Z,8Z,10E,14Z)-eicosatetraenoate + oxidized [NADPH--hemoprotein reductase] + H2O + H(+). It carries out the reaction 15-hydroxy-(5Z,8Z,11Z,13E)-eicosatetraenoate + reduced [NADPH--hemoprotein reductase] + O2 = 15,20-dihydroxy-(5Z,8Z,11Z,13E)-eicosatetraenoate + oxidized [NADPH--hemoprotein reductase] + H2O + H(+). It participates in lipid metabolism; arachidonate metabolism. The protein operates within lipid metabolism; oxylipin biosynthesis. Its pathway is cofactor degradation; phylloquinone degradation. It functions in the pathway xenobiotic degradation. With respect to regulation, inhibition of the long-chain fatty acid omega-monooxygenase activity by 4-hydroxynonenal (4-HNE) conjugation. Functionally, a cytochrome P450 monooxygenase involved in the metabolism of various endogenous substrates, including fatty acids and their oxygenated derivatives (oxylipins). Mechanistically, uses molecular oxygen inserting one oxygen atom into a substrate, and reducing the second into a water molecule, with two electrons provided by NADPH via cytochrome P450 reductase (CPR; NADPH-ferrihemoprotein reductase). Catalyzes with high efficiency the oxidation of the terminal carbon (omega-oxidation) of 3-hydroxy fatty acids, such as 3-hydroxyhexadecanoic and 3-hydroxyoctadecanoic acids, likely participating in the biosynthesis of long-chain 3-hydroxydicarboxylic acids. Omega-hydroxylates and inactivates phylloquinone (vitamin K1), and menaquinone-4 (MK-4, a form of vitamin K2), both acting as cofactors in blood coagulation. Metabolizes with low efficiciency fatty acids, including (5Z,8Z,11Z,14Z)-eicosatetraenoic acid (arachidonate) and its oxygenated metabolite 8-hydroxyeicosatetraenoic acid (8-HETE). Catalyzes N- and O-demethylation of drugs such as erythromycin, benzphetamine, ethylmorphine, chlorpromazine, imipramine and verapamil. Catalyzes the oxidation of dialkylresorcinol 2. The polypeptide is Cytochrome P450 4F11 (Homo sapiens (Human)).